A 325-amino-acid polypeptide reads, in one-letter code: Chain length determinant protein (325 aa).

Over 1-31 (MRVENNNVSGQNHDPEQIDLIDLLVQLWRGK) the chain is Cytoplasmic. Residues 32–52 (MTIIISVIVAIALAIGYLAVA) traverse the membrane as a helical segment. Residues 53 to 294 (KEKWTSTAII…LPIRRDSPKK (242 aa)) lie on the Periplasmic side of the membrane. A helical transmembrane segment spans residues 295-315 (AITLILAVLLGGMVGAGIVLG). Residues 316-325 (RNALRNYNAK) are Cytoplasmic-facing.

Belongs to the WzzB/Cld/Rol family.

The protein resides in the cell inner membrane. It participates in bacterial outer membrane biogenesis; lipopolysaccharide biosynthesis. Confers a modal distribution of chain length on the O-antigen component of lipopolysaccharide (LPS). Gives rise to a reduced number of short chain molecules and increases in numbers of longer molecules. This Shigella flexneri protein is Chain length determinant protein (wzzB).